The primary structure comprises 92 residues: Small ribosomal subunit protein uS19c (92 aa).

Belongs to the universal ribosomal protein uS19 family.

The protein resides in the plastid. The protein localises to the chloroplast. In terms of biological role, protein S19 forms a complex with S13 that binds strongly to the 16S ribosomal RNA. The polypeptide is Small ribosomal subunit protein uS19c (Fagopyrum esculentum subsp. ancestrale (Wild buckwheat)).